Here is a 726-residue protein sequence, read N- to C-terminus: Dipeptidyl-peptidase 5 (726 aa).

Residues 1-19 (MAAAKWLIASLAFASSGLA) form the signal peptide. 2 N-linked (GlcNAc...) asparagine glycosylation sites follow: asparagine 96 and asparagine 252. The segment at 269 to 291 (AEPINKRNGPRTPQGIEGASSSP) is disordered. Serine 558 functions as the Charge relay system in the catalytic mechanism. Residues asparagine 605 and asparagine 638 are each glycosylated (N-linked (GlcNAc...) asparagine). Active-site charge relay system residues include aspartate 641 and histidine 673. Asparagine 699 carries an N-linked (GlcNAc...) asparagine glycan.

Belongs to the peptidase S9C family.

Its subcellular location is the secreted. The chain is Dipeptidyl-peptidase 5 (DPPV) from Trichophyton schoenleinii.